A 728-amino-acid chain; its full sequence is Golgin subfamily A member 5 (728 aa).

At Ser2 the chain carries N-acetylserine. Over 2-695 (SWFADLAGRA…IFLRRYPIAR (694 aa)) the chain is Cytoplasmic. Residues Arg27 and Arg89 each carry the dimethylated arginine modification. The segment at 88 to 202 (SRTGGDASHP…KKSTEESTVS (115 aa)) is disordered. Ser116 is modified (phosphoserine). Over residues 134–146 (PTGRVEIKKEKGK) the composition is skewed to basic and acidic residues. Over residues 152-167 (SSQSSAVSSVTTSVTT) the composition is skewed to low complexity. Polar residues predominate over residues 173–187 (ENSGSQSPEVSSSDS). Positions 216–628 (GSMSHELSNL…LEQQLHSAAT (413 aa)) form a coiled coil. The helical; Anchor for type IV membrane protein transmembrane segment at 696–716 (VFVIIYMALLHLWVMIVLLTY) threads the bilayer. Residues 717–728 (SPEMHHDQPYGK) lie on the Lumenal side of the membrane.

Homodimer. Interacts with RAB1A that has been activated by GTP-binding. Interacts with isoform CASP of CUX1. Highly phosphorylated during mitosis. Phosphorylation is barely detectable during interphase.

It localises to the golgi apparatus membrane. In terms of biological role, involved in maintaining Golgi structure. Stimulates the formation of Golgi stacks and ribbons. Involved in intra-Golgi retrograde transport. This is Golgin subfamily A member 5 (Golga5) from Rattus norvegicus (Rat).